The chain runs to 486 residues: Vacuolar-processing enzyme beta-isozyme (486 aa).

Positions Met-1 to Ala-21 are cleaved as a signal peptide. His-169 is a catalytic residue. Residue Cys-211 is the Nucleophile of the active site. An intrachain disulfide couples Cys-244 to Cys-258. Asn-309 carries an N-linked (GlcNAc...) asparagine glycan. 2 disulfide bridges follow: Cys-420-Cys-450 and Cys-432-Cys-467.

It belongs to the peptidase C13 family. Auto-catalytic activation. As to expression, seed specific. Also expressed in the flowers and buds.

Its subcellular location is the vacuole. It is found in the protein storage vacuole. It carries out the reaction Hydrolysis of proteins and small molecule substrates at -Asn-|-Xaa- bonds.. Asparagine-specific endopeptidase involved in the processing of vacuolar seed protein precursors into the mature forms. Probably involved in post-translational proteolysis of seed storage proteins in the protein storage vacuole of developing seeds. The sequence is that of Vacuolar-processing enzyme beta-isozyme from Arabidopsis thaliana (Mouse-ear cress).